A 372-amino-acid chain; its full sequence is F-box/kelch-repeat protein At4g14905 (372 aa).

Residues 34–74 form the F-box domain; the sequence is LHDEIAVSCFARVPRCYYPAISLVCRNFRRLMASPEIYIER. Kelch repeat units follow at residues 137 to 183, 184 to 229, and 232 to 280; these read ETYV…LIDG, KLYV…FFVM, and KIYR…CMNQ.

The chain is F-box/kelch-repeat protein At4g14905 from Arabidopsis thaliana (Mouse-ear cress).